Consider the following 115-residue polypeptide: Basic leucine zipper transcriptional factor ATF-like (115 aa).

Positions 1–57 (MQQEPDRNEQGYCSSPPSSNKQDSSDDTKKIQRREKNRIAAQKSRQRQTQKADSLHI) are disordered. The bZIP domain occupies 27-90 (DTKKIQRREK…KYLTCVLSTH (64 aa)). A basic motif region spans residues 29–51 (KKIQRREKNRIAAQKSRQRQTQK). The interval 55–83 (LHIESENLERLNSALRGEISGLREELKYL) is leucine-zipper.

Belongs to the bZIP family.

The protein localises to the nucleus. Its subcellular location is the cytoplasm. In terms of biological role, AP-1 family transcription factor that controls the differentiation of lineage-specific cells in the immune system: specifically mediates the differentiation of T-helper 17 cells (Th17), follicular T-helper cells (TfH), CD8(+) dendritic cells and class-switch recombination (CSR) in B-cells. The protein is Basic leucine zipper transcriptional factor ATF-like (batf) of Xenopus tropicalis (Western clawed frog).